Reading from the N-terminus, the 711-residue chain is Ribosomal RNA large subunit methyltransferase K/L (711 aa).

The region spanning 43–154 (LGYRITLWSR…RGQITIGLNF (112 aa)) is the THUMP domain.

It belongs to the methyltransferase superfamily. RlmKL family.

It is found in the cytoplasm. It catalyses the reaction guanosine(2445) in 23S rRNA + S-adenosyl-L-methionine = N(2)-methylguanosine(2445) in 23S rRNA + S-adenosyl-L-homocysteine + H(+). The catalysed reaction is guanosine(2069) in 23S rRNA + S-adenosyl-L-methionine = N(2)-methylguanosine(2069) in 23S rRNA + S-adenosyl-L-homocysteine + H(+). In terms of biological role, specifically methylates the guanine in position 2445 (m2G2445) and the guanine in position 2069 (m7G2069) of 23S rRNA. The chain is Ribosomal RNA large subunit methyltransferase K/L from Shewanella sediminis (strain HAW-EB3).